The following is a 91-amino-acid chain: MKTQTLLVTFLVVLLMVATQTEAGIADILKGLLGKRGLLDGLLGKRGLLFGKRGPLFGKRALTNQDFLDFAYDPSLSAADMDALEMLFEDY.

A signal peptide spans 1 to 23 (MKTQTLLVTFLVVLLMVATQTEA). Leu-33 is modified (leucine amide). Positions 37 to 91 (GLLDGLLGKRGLLFGKRGPLFGKRALTNQDFLDFAYDPSLSAADMDALEMLFEDY) are excised as a propeptide.

This sequence belongs to the non-disulfide-bridged peptide (NDBP) superfamily. Short antimicrobial peptide (group 4) family. Expressed by the venom gland.

It is found in the secreted. It localises to the target cell membrane. Antimicrobial peptide. The protein is Peptide Ctry2146 of Chaerilus tryznai (Scorpion).